A 167-amino-acid chain; its full sequence is Leukotoxin-activating lysine-acyltransferase LktC serotype A1 (167 aa).

Active-site residues include His22 and Asp91.

It belongs to the RTX toxin acyltransferase family.

The protein resides in the cytoplasm. It catalyses the reaction a fatty acyl-[ACP] + L-lysyl-[protein] = N(6)-(fatty acyl)-L-lysyl-[protein] + holo-[ACP] + H(+). Its function is as follows. Involved in fatty acylation of the protoxin (LktA) at two internal lysine residues, thereby converting it to the active toxin. The sequence is that of Leukotoxin-activating lysine-acyltransferase LktC serotype A1 (lktC) from Mannheimia haemolytica (Pasteurella haemolytica).